The primary structure comprises 351 residues: MAPVLPVVLPLQPRIRLAQGTWLLSWLLALAGGLTLLCSGHLLVQLWHLGTFLAPSCSFPALPQTALAAGAVALGTGLGGAGASRASLDAAQYPPWRGVLTPLLVVGTAAGGGLLTLGLGLALALPVSLHQGLEEGLQAALAHYKDTEVPGHCQAKRLMDELQLRYHCCGRHGYKDWFGVQWVSSRYLDPNDQDVVDRIQSNVEGLYLIDGVPFSCCNPHSPRPCLQSQLSDPYAHPLFDPRQPNLNLWAQGCHEVLVGHLQGLSGTLGSILAVTLLLQVLVLLGLRYLQTALEGLGGVIDGEGETQGYLLPGGLKDILQTAWLQGGLAHKPAPEEAPPDEEPPKEVLAEA.

At 1–19 the chain is on the cytoplasmic side; that stretch reads MAPVLPVVLPLQPRIRLAQ. The helical transmembrane segment at 20–44 threads the bilayer; sequence GTWLLSWLLALAGGLTLLCSGHLLV. The Lumenal portion of the chain corresponds to 45-64; it reads QLWHLGTFLAPSCSFPALPQ. A helical transmembrane segment spans residues 65–84; the sequence is TALAAGAVALGTGLGGAGAS. The Cytoplasmic portion of the chain corresponds to 85–102; sequence RASLDAAQYPPWRGVLTP. Residues 103–125 form a helical membrane-spanning segment; that stretch reads LLVVGTAAGGGLLTLGLGLALAL. The Lumenal segment spans residues 126-263; it reads PVSLHQGLEE…HEVLVGHLQG (138 aa). Residues 264–286 traverse the membrane as a helical segment; the sequence is LSGTLGSILAVTLLLQVLVLLGL. Residues 287–351 are Cytoplasmic-facing; it reads RYLQTALEGL…EPPKEVLAEA (65 aa). Positions 329–351 are disordered; it reads AHKPAPEEAPPDEEPPKEVLAEA. Residues 342-351 are compositionally biased toward basic and acidic residues; sequence EPPKEVLAEA.

It belongs to the PRPH2/ROM1 family. As to quaternary structure, homodimer; disulfide-linked. Forms a homotetramer. Forms a heterotetramer with PRPH2. Homotetramer and heterotetramer core complexes go on to form higher order complexes by formation of intermolecular disulfide bonds. Interacts with STX3. Interacts with SNAP25.

The protein resides in the photoreceptor inner segment membrane. Its subcellular location is the photoreceptor outer segment membrane. Its function is as follows. Plays a role in rod outer segment (ROS) morphogenesis. May play a role with PRPH2 in the maintenance of the structure of ROS curved disks. Plays a role in the organization of the ROS and maintenance of ROS disk diameter. Involved in the maintenance of the retina outer nuclear layer. The protein is Rod outer segment membrane protein 1 (Rom1) of Rattus norvegicus (Rat).